A 447-amino-acid chain; its full sequence is Gustatory receptor family protein 3 (447 aa).

The Extracellular segment spans residues 1–69 (MTITASNTLE…HTHSSARNTM (69 aa)). Residues 70-90 (FKWPLTIYNYLTLAILTAATI) traverse the membrane as a helical segment. Over 91–116 (RRISQIKQKSATNEEKDAAFHVLNPT) the chain is Cytoplasmic. A helical membrane pass occupies residues 117 to 137 (FVLTLCHALLMFSGLAAGFLL). At 138–171 (LKLQKQREKMYHVLDQGLGRNRNEEHDSHHFKLN) the chain is on the extracellular side. The helical transmembrane segment at 172–192 (KLFISISFSFAAALSFVQIAT) threads the bilayer. At 193 to 211 (KMRYLDLPDTPDLINRKIY) the chain is on the cytoplasmic side. A helical membrane pass occupies residues 212–232 (FVILEGYVIFIASSCISLVAI). Residues 233–292 (LFFQLCRILQFSIGQLIEEMVPKEKEECPLPEQSLQQIHDVQIHYQEISNAKLYIEQNFS) lie on the Extracellular side of the membrane. The chain crosses the membrane as a helical span at residues 293–313 (FSLFYTYGCCIPLTCLLGYIA). Topologically, residues 314-328 (FRNGIQADMAETFSV) are cytoplasmic. A helical transmembrane segment spans residues 329–349 (AIWLTNTMLALMLFSIPAFMI). At 350-405 (AEEGDKLLTASFKMYHETLCEERDLLVLSQMSFLSFQMHATKLTLTAGNFFMMNRK) the chain is on the extracellular side. Residues 406–426 (IMISLFSAIFTYFLILVQFDA) form a helical membrane-spanning segment. Residues 427–447 (EKERAGECNNQSRVLIVQPPV) are Cytoplasmic-facing.

This sequence belongs to the insect chemoreceptor superfamily. Gustatory receptor (GR) family. As to expression, expressed in I2 pharyngeal neurons.

The protein resides in the membrane. Chemoreceptor involved in light-induced avoidance behavior. Probably acts as a molecular sensor in I2 pharyngeal neurons, required for the inhibition of feeding in response to light and hydrogen peroxide. Involved in circadian rhythms, probably by acting as a light sensor. In contrast to lite-1, does not act as a photoreceptor. The protein is Gustatory receptor family protein 3 of Caenorhabditis elegans.